The chain runs to 142 residues: Large ribosomal subunit protein uL11 (142 aa).

Belongs to the universal ribosomal protein uL11 family. In terms of assembly, part of the ribosomal stalk of the 50S ribosomal subunit. Interacts with L10 and the large rRNA to form the base of the stalk. L10 forms an elongated spine to which L12 dimers bind in a sequential fashion forming a multimeric L10(L12)X complex. One or more lysine residues are methylated.

Its function is as follows. Forms part of the ribosomal stalk which helps the ribosome interact with GTP-bound translation factors. The chain is Large ribosomal subunit protein uL11 from Mycobacterium sp. (strain MCS).